Reading from the N-terminus, the 414-residue chain is tRNA(Ile)-lysidine synthase (414 aa).

An ATP-binding site is contributed by 17 to 22; that stretch reads SGGCDS.

Belongs to the tRNA(Ile)-lysidine synthase family.

The protein localises to the cytoplasm. The enzyme catalyses cytidine(34) in tRNA(Ile2) + L-lysine + ATP = lysidine(34) in tRNA(Ile2) + AMP + diphosphate + H(+). In terms of biological role, ligates lysine onto the cytidine present at position 34 of the AUA codon-specific tRNA(Ile) that contains the anticodon CAU, in an ATP-dependent manner. Cytidine is converted to lysidine, thus changing the amino acid specificity of the tRNA from methionine to isoleucine. This is tRNA(Ile)-lysidine synthase from Exiguobacterium sibiricum (strain DSM 17290 / CCUG 55495 / CIP 109462 / JCM 13490 / 255-15).